Consider the following 914-residue polypeptide: Alanine--tRNA ligase (914 aa).

Residues His608, His612, Cys711, and His715 each contribute to the Zn(2+) site.

It belongs to the class-II aminoacyl-tRNA synthetase family. It depends on Zn(2+) as a cofactor.

It localises to the cytoplasm. The catalysed reaction is tRNA(Ala) + L-alanine + ATP = L-alanyl-tRNA(Ala) + AMP + diphosphate. Its function is as follows. Catalyzes the attachment of alanine to tRNA(Ala) in a two-step reaction: alanine is first activated by ATP to form Ala-AMP and then transferred to the acceptor end of tRNA(Ala). Also edits incorrectly charged Ser-tRNA(Ala) and Gly-tRNA(Ala) via its editing domain. In Methanoregula boonei (strain DSM 21154 / JCM 14090 / 6A8), this protein is Alanine--tRNA ligase.